The following is a 379-amino-acid chain: Carbamoyl phosphate synthase small chain (379 aa).

The segment at 1-189 is CPSase; that stretch reads MSKLALLVLE…GLPEAKDDSE (189 aa). Positions 47, 241, and 243 each coordinate L-glutamine. A Glutamine amidotransferase type-1 domain is found at 193-379; that stretch reads HVVAYDFGAK…FIELIKKHSA (187 aa). Cys-269 acts as the Nucleophile in catalysis. L-glutamine contacts are provided by Leu-270, Gln-273, Asn-311, Gly-313, and Phe-314. Active-site residues include His-353 and Glu-355.

The protein belongs to the CarA family. In terms of assembly, composed of two chains; the small (or glutamine) chain promotes the hydrolysis of glutamine to ammonia, which is used by the large (or ammonia) chain to synthesize carbamoyl phosphate. Tetramer of heterodimers (alpha,beta)4.

It catalyses the reaction hydrogencarbonate + L-glutamine + 2 ATP + H2O = carbamoyl phosphate + L-glutamate + 2 ADP + phosphate + 2 H(+). The enzyme catalyses L-glutamine + H2O = L-glutamate + NH4(+). The protein operates within amino-acid biosynthesis; L-arginine biosynthesis; carbamoyl phosphate from bicarbonate: step 1/1. Its pathway is pyrimidine metabolism; UMP biosynthesis via de novo pathway; (S)-dihydroorotate from bicarbonate: step 1/3. In terms of biological role, small subunit of the glutamine-dependent carbamoyl phosphate synthetase (CPSase). CPSase catalyzes the formation of carbamoyl phosphate from the ammonia moiety of glutamine, carbonate, and phosphate donated by ATP, constituting the first step of 2 biosynthetic pathways, one leading to arginine and/or urea and the other to pyrimidine nucleotides. The small subunit (glutamine amidotransferase) binds and cleaves glutamine to supply the large subunit with the substrate ammonia. The sequence is that of Carbamoyl phosphate synthase small chain from Vibrio parahaemolyticus serotype O3:K6 (strain RIMD 2210633).